A 401-amino-acid polypeptide reads, in one-letter code: Elongation factor Tu 1 (401 aa).

Residues 10–209 (KPHVNVGTIG…AVDEYIPTPV (200 aa)) enclose the tr-type G domain. The segment at 19 to 26 (GHVDHGKT) is G1. A GTP-binding site is contributed by 19–26 (GHVDHGKT). Residue threonine 26 participates in Mg(2+) binding. The tract at residues 60–64 (GITIA) is G2. The segment at 81-84 (DCPG) is G3. GTP is bound by residues 81 to 85 (DCPGH) and 136 to 139 (NKVD). The G4 stretch occupies residues 136–139 (NKVD). The G5 stretch occupies residues 174-176 (SAL).

This sequence belongs to the TRAFAC class translation factor GTPase superfamily. Classic translation factor GTPase family. EF-Tu/EF-1A subfamily. In terms of assembly, monomer.

The protein resides in the cytoplasm. The enzyme catalyses GTP + H2O = GDP + phosphate + H(+). Functionally, GTP hydrolase that promotes the GTP-dependent binding of aminoacyl-tRNA to the A-site of ribosomes during protein biosynthesis. The protein is Elongation factor Tu 1 of Roseiflexus sp. (strain RS-1).